A 504-amino-acid polypeptide reads, in one-letter code: Glycerol kinase (504 aa).

Residue threonine 14 participates in ADP binding. ATP contacts are provided by threonine 14, threonine 15, and serine 16. Threonine 14 is a binding site for sn-glycerol 3-phosphate. Arginine 18 contacts ADP. The sn-glycerol 3-phosphate site is built by arginine 84, glutamate 85, tyrosine 136, and aspartate 246. Residues arginine 84, glutamate 85, tyrosine 136, aspartate 246, and glutamine 247 each contribute to the glycerol site. Threonine 268 and glycine 311 together coordinate ADP. The ATP site is built by threonine 268, glycine 311, glutamine 315, and glycine 412. Glycine 412 and asparagine 416 together coordinate ADP.

This sequence belongs to the FGGY kinase family.

The catalysed reaction is glycerol + ATP = sn-glycerol 3-phosphate + ADP + H(+). It functions in the pathway polyol metabolism; glycerol degradation via glycerol kinase pathway; sn-glycerol 3-phosphate from glycerol: step 1/1. Inhibited by fructose 1,6-bisphosphate (FBP). In terms of biological role, key enzyme in the regulation of glycerol uptake and metabolism. Catalyzes the phosphorylation of glycerol to yield sn-glycerol 3-phosphate. This is Glycerol kinase from Aliivibrio fischeri (strain ATCC 700601 / ES114) (Vibrio fischeri).